The sequence spans 147 residues: Hemoglobin subunit delta (147 aa).

In terms of domain architecture, Globin spans 3–147 (HLTADEKAAV…VAAALAHKYH (145 aa)). Residues His64 and His93 each coordinate heme b.

It belongs to the globin family. Heterotetramer of two delta chains and two alpha chains. Red blood cells.

The sequence is that of Hemoglobin subunit delta (HBD) from Carlito syrichta (Philippine tarsier).